The chain runs to 536 residues: Aminopeptidase (536 aa).

The first 24 residues, 1-24 (MSNKNNLRYALGALALSVSAASLA), serve as a signal peptide directing secretion. The PA domain occupies 152–255 (AGDVTAKVVP…ATYDNGVAWS (104 aa)). The residue at position 196 (Thr196) is a Phosphothreonine. The Zn(2+) site is built by His296 and Asp308. Catalysis depends on Glu340, which acts as the Proton acceptor. The Zn(2+) site is built by Glu341, Asp369, and His467. A disulfide bridge connects residues Cys465 and Cys470.

It belongs to the peptidase M28 family. M28A subfamily. The cofactor is Zn(2+).

Its subcellular location is the secreted. It carries out the reaction Release of an N-terminal amino acid, Xaa-|-Yaa-, in which Xaa is preferably Leu, but may be other amino acids including Pro although not Arg or Lys, and Yaa may be Pro. Amino acid amides and methyl esters are also readily hydrolyzed, but rates on arylamides are exceedingly low.. Functionally, a secreted aminopeptidase. Acts on free N-terminal amino groups with a very strong preference for Leu in the first position. This chain is Aminopeptidase, found in Pseudomonas aeruginosa (strain UCBPP-PA14).